The chain runs to 761 residues: Proton-coupled zinc antiporter SLC30A5 (761 aa).

Position 1 is an N-acetylmethionine (methionine 1). The Cytoplasmic portion of the chain corresponds to 1–29; sequence MEEKYGGDARPGPGGGLGPVDVPSARLTR. Residues 30 to 46 traverse the membrane as a helical segment; it reads YILLLCLTKCLKAVGLF. Residues 47-54 lie on the Lumenal side of the membrane; it reads ESYDLLKA. Residues 55 to 75 form a helical membrane-spanning segment; sequence VHIVQFIFILKLGTAFFMVLF. Residues 76-96 lie on the Cytoplasmic side of the membrane; the sequence is QKPFSSGKPITKHQWIKIFKH. A helical transmembrane segment spans residues 97–117; that stretch reads AVAGCIISLLWFFGLTLCGPL. Residue arginine 118 is a topological domain, lumenal. The helical transmembrane segment at 119-139 threads the bilayer; sequence TLLLFEHSDIVVISLLSVLFT. The Cytoplasmic portion of the chain corresponds to 140 to 150; the sequence is SSGGGPAKTRG. A helical membrane pass occupies residues 151–171; that stretch reads AAFFIIAVICLLLFDNDDLMA. Over 172-191 the chain is Lumenal; the sequence is KMAEHPEGHHDSALTHMLYT. The helical transmembrane segment at 192–212 threads the bilayer; it reads AIAFLGVADHKGGVLLLVLAL. Residues 213–236 lie on the Cytoplasmic side of the membrane; it reads CCKVGFHTASRKLSIDVGGAKRLQ. Residues 237–257 form a helical membrane-spanning segment; the sequence is ALSQLVSVFLLCPWVIVLSVT. The Lumenal portion of the chain corresponds to 258-264; that stretch reads TESKVES. Residues 265–285 traverse the membrane as a helical segment; that stretch reads WFSLIMPFTTVIFFVMILDFY. Topologically, residues 286–301 are cytoplasmic; that stretch reads MDSVCSVKMDVSKCAR. Residues 302 to 322 traverse the membrane as a helical segment; that stretch reads YGSFPIFISALLFGNFWTHPI. The Lumenal portion of the chain corresponds to 323-340; that stretch reads TDQLRAMNRAAHQESTEH. Residues 341–361 traverse the membrane as a helical segment; the sequence is VLSGGVVVSAVFFILSANILS. Topologically, residues 362-416 are cytoplasmic; that stretch reads SPSKRGQKGTLIGYSPEGTPLYHFMGDAFQHSSQSVPRFIKDSLKQVLEESDSRQ. The helical transmembrane segment at 417–437 threads the bilayer; sequence IFYFLCLNLLFTFVELFYGVL. The interval 418 to 636 is mediates homodimerization with SLC30A6; it reads FYFLCLNLLF…VLIFLSVIPL (219 aa). Over 438-446 the chain is Lumenal; it reads TNSLGLISD. A helical transmembrane segment spans residues 447-467; that stretch reads GFHMLFDCSALVMGLFAALMS. Zn(2+) contacts are provided by histidine 449 and aspartate 453. The Cytoplasmic segment spans residues 468 to 481; that stretch reads RWKATRIFSYGYGR. A helical transmembrane segment spans residues 482-502; that stretch reads IEILSGFINGLFLIVIAFFVF. Over 503–518 the chain is Lumenal; sequence MESVARLIDPPELDTN. Residues 519–539 traverse the membrane as a helical segment; the sequence is MLTPVSVGGLIVNLIGICAFS. The tract at residues 540-574 is his-rich loop; required for zinc transport; that stretch reads HAHSHGHGASQGNCHSDHGHSHHAHGHGHDHGHSH. The Cytoplasmic portion of the chain corresponds to 540–588; it reads HAHSHGHGASQGNCHSDHGHSHHAHGHGHDHGHSHGFTGGGMNANMRGV. The tract at residues 549–576 is disordered; the sequence is SQGNCHSDHGHSHHAHGHGHDHGHSHGF. A helical transmembrane segment spans residues 589 to 609; sequence FLHVLADTLGSIGVIVSTVLI. Zn(2+)-binding residues include histidine 591 and aspartate 595. Residues 610–613 are Lumenal-facing; that stretch reads EQFG. A helical membrane pass occupies residues 614 to 634; sequence WFIADPLCSLFIAVLIFLSVI. Topologically, residues 635–761 are cytoplasmic; sequence PLIKDACQVL…KYCKDGTYIM (127 aa).

Belongs to the cation diffusion facilitator (CDF) transporter (TC 2.A.4) family. SLC30A subfamily. As to quaternary structure, heterodimer with SLC30A6/ZNT6; form a functional zinc ion transmembrane transporter. In terms of processing, could homodimerize through the formation of dityrosine bonds upon oxidative stress. As to expression, ubiquitously expressed.

The protein resides in the golgi apparatus. Its subcellular location is the golgi stack membrane. The protein localises to the cytoplasmic vesicle. It is found in the COPII-coated vesicle membrane. It localises to the secretory vesicle membrane. The protein resides in the trans-Golgi network membrane. It carries out the reaction Zn(2+)(in) + 2 H(+)(out) = Zn(2+)(out) + 2 H(+)(in). Together with SLC30A6 forms a functional proton-coupled zinc ion antiporter mediating zinc entry into the lumen of organelles along the secretory pathway. By contributing to zinc ion homeostasis within the early secretory pathway, regulates the activation and folding of enzymes like alkaline phosphatases and enzymes involved in phosphatidylinositol glycan anchor biosynthesis. Through the transport of zinc into secretory granules of pancreatic beta-cells, plays an important role in the storage and secretion of insulin. The polypeptide is Proton-coupled zinc antiporter SLC30A5 (Mus musculus (Mouse)).